A 157-amino-acid polypeptide reads, in one-letter code: MEKVPMTSAGFAALGEELKKRQSEDRPRIIEHIAEARSHGDLSENAEYHAAKEEQSHNEGRIAELEDKLARADIIDISKLSGDTIKFGATVTLVDEDTEKKAVWQIVGEVEADAKKGRISITSPLARALIGKKKGSTVEVNAPGGAKAYEITKVEWR.

The tract at residues 1–60 (MEKVPMTSAGFAALGEELKKRQSEDRPRIIEHIAEARSHGDLSENAEYHAAKEEQSHNEG) is disordered. Residues 16–60 (EELKKRQSEDRPRIIEHIAEARSHGDLSENAEYHAAKEEQSHNEG) show a composition bias toward basic and acidic residues. Positions 46 to 73 (AEYHAAKEEQSHNEGRIAELEDKLARAD) form a coiled coil.

It belongs to the GreA/GreB family.

In terms of biological role, necessary for efficient RNA polymerase transcription elongation past template-encoded arresting sites. The arresting sites in DNA have the property of trapping a certain fraction of elongating RNA polymerases that pass through, resulting in locked ternary complexes. Cleavage of the nascent transcript by cleavage factors such as GreA or GreB allows the resumption of elongation from the new 3'terminus. GreA releases sequences of 2 to 3 nucleotides. The sequence is that of Transcription elongation factor GreA from Bradyrhizobium diazoefficiens (strain JCM 10833 / BCRC 13528 / IAM 13628 / NBRC 14792 / USDA 110).